We begin with the raw amino-acid sequence, 37 residues long: Albumin-2 (37 aa).

The Hemopexin repeat unit spans residues 6-37 (IANFSVLNXEAYLFINDKYVLLDYAPGTXNDK).

As to quaternary structure, dimer. In terms of tissue distribution, expressed in seeds (at protein level).

The protein resides in the cytoplasm. It is found in the cytosol. In terms of biological role, binds hemin and thiamine. The protein is Albumin-2 of Lens culinaris (Lentil).